We begin with the raw amino-acid sequence, 216 residues long: Ras-related protein Rab-5C (216 aa).

Serine 30, alanine 31, glycine 33, lysine 34, serine 35, serine 36, histidine 47, glutamate 48, threonine 53, and glycine 79 together coordinate GTP. Residue serine 35 participates in Mg(2+) binding. 2 short sequence motifs (switch) span residues 45 to 57 and 78 to 94; these read QFHE…IGAA and AGQE…YRGA. Position 53 (threonine 53) interacts with Mg(2+). Serine 85 is subject to Phosphoserine. Positions 134, 135, 137, 165, and 166 each coordinate GTP. The segment at 185–216 is disordered; that stretch reads NEPQNAAGAPGRTRGVDLQESNPASRSQCCSN. Positions 203 to 216 are enriched in polar residues; that stretch reads QESNPASRSQCCSN. S-geranylgeranyl cysteine attachment occurs at residues cysteine 213 and cysteine 214.

The protein belongs to the small GTPase superfamily. Rab family. Interacts with EEA1 and INCA1. Interacts with GDI1, GDI2, CHML and CHM; phosphorylation at Ser-85 disrupts this interaction. Requires Mg(2+) as cofactor. In terms of processing, phosphorylation of Ser-85 in the switch II region by LRRK2 prevents the association of RAB regulatory proteins, including CHM, CHML and RAB GDP dissociation inhibitors GDI1 and GDI2.

The protein localises to the cell membrane. Its subcellular location is the early endosome membrane. It localises to the melanosome. The catalysed reaction is GTP + H2O = GDP + phosphate + H(+). Regulated by guanine nucleotide exchange factors (GEFs) which promote the exchange of bound GDP for free GTP. Regulated by GTPase activating proteins (GAPs) which increase the GTP hydrolysis activity. Inhibited by GDP dissociation inhibitors (GDIs). Functionally, the small GTPases Rab are key regulators of intracellular membrane trafficking, from the formation of transport vesicles to their fusion with membranes. Rabs cycle between an inactive GDP-bound form and an active GTP-bound form that is able to recruit to membranes different sets of downstream effectors directly responsible for vesicle formation, movement, tethering and fusion. The protein is Ras-related protein Rab-5C of Mus musculus (Mouse).